The primary structure comprises 364 residues: Paraneoplastic antigen Ma2 homolog (364 aa).

Position 2 is an N-acetylalanine (Ala2). The span at 335–351 shows a compositional bias: acidic residues; that stretch reads EEEEATFENENTEEPEG. Positions 335-364 are disordered; the sequence is EEEEATFENENTEEPEGGDGYGHWGNEAND.

It belongs to the PNMA family.

The protein localises to the nucleus. It is found in the nucleolus. This is Paraneoplastic antigen Ma2 homolog (PNMA2) from Bos taurus (Bovine).